We begin with the raw amino-acid sequence, 169 residues long: Regulator of G-protein signaling rgs-2 (169 aa).

Residues 39 to 158 (GWSQSFENLM…FLASNIYKTV (120 aa)) form the RGS domain.

May be phosphorylated and activated by egl-4. As to expression, expressed in a subset of neurons including ventral cord and head- and tail-ganglia neurons. Also expressed in non-neuronal cells including pharyngeal and uterine muscles.

Weakly inhibits G protein signaling in nervous system, interacting preferentially with the G(O) subfamily member goa-1. In vitro, it acts as a GTPase activator of goa-1. Rgs-1 and rgs-2 redundantly adjust signaling when worms are fed to allow rapid induction of egg-laying behavior. Modulates chemotaxis responses by regulating negatively the sensitivity to quinine in ASH sensory neurons. This Caenorhabditis elegans protein is Regulator of G-protein signaling rgs-2 (rgs-2).